Here is a 149-residue protein sequence, read N- to C-terminus: Active regulator of SIRT1 (149 aa).

The interval 1-64 is disordered; it reads MSVSLLRKGL…GLRHDQKATA (64 aa). Positions 8–19 are enriched in basic and acidic residues; that stretch reads KGLDLLREERSG. Over residues 30-41 the composition is skewed to low complexity; sequence SSKPKPCLSSSK. The span at 43–52 shows a compositional bias: basic residues; sequence GMRKQLRRLK.

The protein belongs to the AROS family. Part of the small subunit (SSU) processome, composed of more than 70 proteins and the RNA chaperone small nucleolar RNA (snoRNA) U3.

Its subcellular location is the nucleus. The protein resides in the nucleolus. Part of the small subunit (SSU) processome, first precursor of the small eukaryotic ribosomal subunit. During the assembly of the SSU processome in the nucleolus, many ribosome biogenesis factors, an RNA chaperone and ribosomal proteins associate with the nascent pre-rRNA and work in concert to generate RNA folding, modifications, rearrangements and cleavage as well as targeted degradation of pre-ribosomal RNA by the RNA exosome. Acts as a chaperone that specifically mediates the integration of RPS19 in state post-A1. Direct regulator of SIRT1. The polypeptide is Active regulator of SIRT1 (rps19bp1) (Xenopus tropicalis (Western clawed frog)).